Reading from the N-terminus, the 63-residue chain is DNA gyrase inhibitor YacG (63 aa).

Zn(2+) is bound by residues Cys9, Cys12, Cys28, and Cys32.

Belongs to the DNA gyrase inhibitor YacG family. In terms of assembly, interacts with GyrB. Zn(2+) is required as a cofactor.

Inhibits all the catalytic activities of DNA gyrase by preventing its interaction with DNA. Acts by binding directly to the C-terminal domain of GyrB, which probably disrupts DNA binding by the gyrase. In Salmonella arizonae (strain ATCC BAA-731 / CDC346-86 / RSK2980), this protein is DNA gyrase inhibitor YacG.